Reading from the N-terminus, the 263-residue chain is Palmitoyltransferase ZDHHC22 (263 aa).

Residues 1 to 9 lie on the Cytoplasmic side of the membrane; that stretch reads MLALRLLNV. The helical transmembrane segment at 10–30 threads the bilayer; the sequence is VAPAYFLCISLVTFVLQLFLF. The Lumenal segment spans residues 31–48; that stretch reads LPSMREDPTATPLFSPAV. A helical membrane pass occupies residues 49–69; that stretch reads LHGALFLFLSANALGNYVLVI. Residues 70 to 125 are Cytoplasmic-facing; the sequence is QNSPDDLGTCQGTMSQRPQCPPPSTHFCRVCSRVTLRHDHHCFFTGNCIGSRNMRN. Positions 91–131 constitute a DHHC domain; that stretch reads PPSTHFCRVCSRVTLRHDHHCFFTGNCIGSRNMRNFILFCL. Cys-111 acts as the S-palmitoyl cysteine intermediate in catalysis. Helical transmembrane passes span 126 to 146 and 147 to 167; these read FILF…AGVA and YISA…TLLP. The Cytoplasmic segment spans residues 168–182; it reads TSISQFFSGAVLGSD. The chain crosses the membrane as a helical span at residues 183–203; sequence MFVILMLYLWFAVGLACAGFC. The Lumenal segment spans residues 204–263; it reads CHQLLLILRGQTRYQVRKGMAVRARPWRKNLQEVFGKRWLLGLLVPMFNVGTESSKQQDK.

The protein belongs to the DHHC palmitoyltransferase family. In terms of assembly, interacts with CNN3.

The protein resides in the endoplasmic reticulum membrane. The protein localises to the golgi apparatus membrane. It carries out the reaction L-cysteinyl-[protein] + hexadecanoyl-CoA = S-hexadecanoyl-L-cysteinyl-[protein] + CoA. In terms of biological role, palmitoyltransferase that could catalyze the addition of palmitate onto various protein substrates and be involved in a variety of cellular processes. Catalyzes the palmitoylation of KCNMA1, regulating localization of KCNMA1 to the plasma membrane. Might also mediate palmitoylation of CNN3. This chain is Palmitoyltransferase ZDHHC22, found in Mus musculus (Mouse).